A 434-amino-acid polypeptide reads, in one-letter code: Protein FAM83A (434 aa).

The tract at residues 1 to 298 (MSRSRHLGKI…LYASSKPVMG (298 aa)) is DUF1669. Positions 76–97 (REPPCPPDTLGGAEAGPKGLDS) are disordered. Residues serine 301, serine 327, serine 348, and serine 357 each carry the phosphoserine modification. Residues 308–399 (VPPGAAPANG…HDGPPAAVYS (92 aa)) form a disordered region. 2 stretches are compositionally biased toward low complexity: residues 320 to 332 (SSSSGSASDRTSS) and 348 to 357 (SVSASSGPCS). The segment covering 358–369 (PAAPHPPPPPRF) has biased composition (pro residues).

Belongs to the FAM83 family. Directly interacts (via DUF1669) with casein kinase isoforms CSNK1A1, CSNK1A1L, CSNK1D and CSNK1E. Post-translationally, phosphorylated upon EGFR activation in a breast cancer cell line.

It is found in the cytoplasm. Involved in mitochondrial maintenance during adipogenesis. May be acting by playing a role in the maintenance of normal mitochondrial function. This Homo sapiens (Human) protein is Protein FAM83A.